An 83-amino-acid chain; its full sequence is MRLFSGMNNQYTRREVFCRNTCHDLKHFWEREIGKQTYYRESEERRLGRSALRKLREEWKQRLETKLRLRNNPEDTEKRTNVG.

The protein belongs to the FAM240 family.

The chain is Protein FAM240A from Homo sapiens (Human).